The chain runs to 475 residues: Threonine synthase (475 aa).

Lys120 carries the N6-(pyridoxal phosphate)lysine modification.

The protein belongs to the threonine synthase family. Pyridoxal 5'-phosphate is required as a cofactor.

The enzyme catalyses O-phospho-L-homoserine + H2O = L-threonine + phosphate. It functions in the pathway amino-acid biosynthesis; L-threonine biosynthesis; L-threonine from L-aspartate: step 5/5. Functionally, catalyzes the gamma-elimination of phosphate from L-phosphohomoserine and the beta-addition of water to produce L-threonine. This Methylobacillus glycogenes protein is Threonine synthase (thrC).